The following is a 579-amino-acid chain: Pre-mRNA-processing factor 17 (579 aa).

The span at 1 to 19 shows a compositional bias: low complexity; that stretch reads MSAAIAALAASYGSGSGSE. Disordered stretches follow at residues 1 to 47 and 204 to 237; these read MSAA…PSSK and DVAK…PGEE. Phosphoserine is present on S46. 7 WD repeats span residues 286-326, 330-369, 371-413, 416-455, 459-498, 504-545, and 548-578; these read GHTK…RCLR, GHSK…CISR, TNRK…IVQE, RHLG…DFKY, PSMH…RLNK, GHMV…LYSR, and AHDK…IKLW.

Component of the pre-catalytic and catalytic spliceosome complexes. Component of the postcatalytic spliceosome P complex. Interacts with PPIL1; this interaction leads to CDC40 isomerization. Post-translationally, undergoes isomerization of the peptide bond between Gly-94 and Pro-95. The reaction is catalyzed by PPIL1.

The protein resides in the nucleus. It is found in the nucleus speckle. Functionally, required for pre-mRNA splicing as component of the activated spliceosome. Plays an important role in embryonic brain development; this function does not require proline isomerization. In Homo sapiens (Human), this protein is Pre-mRNA-processing factor 17 (CDC40).